The chain runs to 523 residues: Putative UDP-glucuronosyltransferase ugt-50 (523 aa).

Positions 1–25 (MHYSQMRWMFFCLTALLHGSFIVNA) are cleaved as a signal peptide. Residues N84, N248, N283, and N487 are each glycosylated (N-linked (GlcNAc...) asparagine). Residues 490–508 (IIEHNHLDLFFYLCIISLL) traverse the membrane as a helical segment.

This sequence belongs to the UDP-glycosyltransferase family.

It is found in the membrane. It catalyses the reaction glucuronate acceptor + UDP-alpha-D-glucuronate = acceptor beta-D-glucuronoside + UDP + H(+). In Caenorhabditis elegans, this protein is Putative UDP-glucuronosyltransferase ugt-50 (ugt-50).